The chain runs to 388 residues: Processive diacylglycerol beta-glucosyltransferase (388 aa).

Belongs to the glycosyltransferase 28 family. UgtP subfamily.

It localises to the cell membrane. It carries out the reaction a 1,2-diacyl-3-O-(beta-D-glucopyranosyl)-sn-glycerol + UDP-alpha-D-glucose = a 1,2-diacyl-3-O-(beta-D-Glc-(1-&gt;6)-beta-D-Glc)-sn-glycerol + UDP + H(+). It catalyses the reaction a 1,2-diacyl-3-O-(beta-D-Glc-(1-&gt;6)-beta-D-Glc)-sn-glycerol + UDP-alpha-D-glucose = a 1,2-diacyl-3-O-(beta-D-Glc-(1-&gt;6)-beta-D-Glc-(1-&gt;6)-beta-D-Glc)-sn-glycerol + UDP + H(+). The catalysed reaction is a 1,2-diacyl-sn-glycerol + UDP-alpha-D-glucose = a 1,2-diacyl-3-O-(beta-D-glucopyranosyl)-sn-glycerol + UDP + H(+). It participates in glycolipid metabolism; diglucosyl-diacylglycerol biosynthesis. In terms of biological role, processive glucosyltransferase involved in the biosynthesis of both the bilayer- and non-bilayer-forming membrane glucolipids. Is able to successively transfer up to three glucosyl residues to diacylglycerol (DAG), thereby catalyzing the formation of beta-monoglucosyl-DAG (3-O-(beta-D-glucopyranosyl)-1,2-diacyl-sn-glycerol), beta-diglucosyl-DAG (3-O-(beta-D-glucopyranosyl-beta-(1-&gt;6)-D-glucopyranosyl)-1,2-diacyl-sn-glycerol) and beta-triglucosyl-DAG (3-O-(beta-D-glucopyranosyl-beta-(1-&gt;6)-D-glucopyranosyl-beta-(1-&gt;6)-D-glucopyranosyl)-1,2-diacyl-sn-glycerol). Beta-diglucosyl-DAG is the predominant glycolipid found in Bacillales and is also used as a membrane anchor for lipoteichoic acid (LTA). This is Processive diacylglycerol beta-glucosyltransferase from Bacillus cereus (strain 03BB102).